Here is a 319-residue protein sequence, read N- to C-terminus: Methionyl-tRNA formyltransferase (319 aa).

A (6S)-5,6,7,8-tetrahydrofolate-binding site is contributed by 116–119; it reads SLLP.

Belongs to the Fmt family.

It carries out the reaction L-methionyl-tRNA(fMet) + (6R)-10-formyltetrahydrofolate = N-formyl-L-methionyl-tRNA(fMet) + (6S)-5,6,7,8-tetrahydrofolate + H(+). Attaches a formyl group to the free amino group of methionyl-tRNA(fMet). The formyl group appears to play a dual role in the initiator identity of N-formylmethionyl-tRNA by promoting its recognition by IF2 and preventing the misappropriation of this tRNA by the elongation apparatus. In Wigglesworthia glossinidia brevipalpis, this protein is Methionyl-tRNA formyltransferase.